The sequence spans 187 residues: Protein SCM4 (187 aa).

The next 3 membrane-spanning stretches (helical) occupy residues 11–31 (IAVS…VISI), 45–65 (VLCT…GAFG), and 80–100 (LLCG…VSLF). The segment covering 114–134 (DLEKQKDEKLPQHHPEVKDGE) has biased composition (basic and acidic residues). The interval 114–135 (DLEKQKDEKLPQHHPEVKDGEA) is disordered. The helical transmembrane segment at 162 to 182 (MSLHMSIVTGITIFTFGKCIL) threads the bilayer.

The protein belongs to the ATG33 family.

Its subcellular location is the membrane. This is Protein SCM4 (SCM4) from Saccharomyces cerevisiae (strain ATCC 204508 / S288c) (Baker's yeast).